The chain runs to 544 residues: NAD(P)H-quinone oxidoreductase chain 4 (544 aa).

Transmembrane regions (helical) follow at residues 29–49, 60–80, 115–135, 139–159, 161–181, 193–213, 234–254, 268–288, 302–322, 339–359, 360–380, 400–422, 442–462, and 488–508; these read FPWL…IPLV, WYAL…YLNG, LILL…PVTF, LFFF…AVQD, LLFF…LAIW, FILY…AMAF, GFQA…LPIV, TAPV…YALF, FAPL…LTSF, MGFV…GAML, QMIS…ATYD, MFAM…GFVS, IVID…LLSM, and IYII…PKLV.

It belongs to the complex I subunit 4 family.

Its subcellular location is the cellular thylakoid membrane. The catalysed reaction is a plastoquinone + NADH + (n+1) H(+)(in) = a plastoquinol + NAD(+) + n H(+)(out). It carries out the reaction a plastoquinone + NADPH + (n+1) H(+)(in) = a plastoquinol + NADP(+) + n H(+)(out). Its function is as follows. NDH-1 shuttles electrons from NAD(P)H, via FMN and iron-sulfur (Fe-S) centers, to quinones in the respiratory chain. The immediate electron acceptor for the enzyme in this species is believed to be plastoquinone. Couples the redox reaction to proton translocation (for every two electrons transferred, four hydrogen ions are translocated across the cytoplasmic membrane), and thus conserves the redox energy in a proton gradient. The chain is NAD(P)H-quinone oxidoreductase chain 4 from Synechococcus sp. (strain RCC307).